The following is a 192-amino-acid chain: Peptidyl-tRNA hydrolase (192 aa).

Tyrosine 17 provides a ligand contact to tRNA. The Proton acceptor role is filled by histidine 22. Positions 68, 70, and 116 each coordinate tRNA.

It belongs to the PTH family. As to quaternary structure, monomer.

It is found in the cytoplasm. It carries out the reaction an N-acyl-L-alpha-aminoacyl-tRNA + H2O = an N-acyl-L-amino acid + a tRNA + H(+). Hydrolyzes ribosome-free peptidyl-tRNAs (with 1 or more amino acids incorporated), which drop off the ribosome during protein synthesis, or as a result of ribosome stalling. Functionally, catalyzes the release of premature peptidyl moieties from peptidyl-tRNA molecules trapped in stalled 50S ribosomal subunits, and thus maintains levels of free tRNAs and 50S ribosomes. The protein is Peptidyl-tRNA hydrolase of Mycolicibacterium vanbaalenii (strain DSM 7251 / JCM 13017 / BCRC 16820 / KCTC 9966 / NRRL B-24157 / PYR-1) (Mycobacterium vanbaalenii).